A 513-amino-acid chain; its full sequence is MQLNPSEISELIKSRIQGLEASADVRNQGTVISVTDGIVRIHGLSDVMQGEMLEFPGNTFGLALNLERDSVGAVILGEYEHISEGDIVKTTGRILEVPVGPELVGRVVDALGNPIDGKGPVNAKLTDAIEKIAPGVIWRKSVSQPVQTGLKSIDSMVPIGRGQRELIIGDRQCGKTAVAIDTIINQKGKDLICIYVAIGQKASSIMNVVRKLEETGALEYTIVVAASASESAAMQYLAPYAGCTMGEYFRDRGQDALIIYDDLTKQAWAYRQISLLLRRPPGREAYPGDVFYLHSRLLERAARVSEEYVEKFTNGEVKGKSGSLTALPVIETQAGDVTAFVPTNVISITDGQIFLETDLFNAGIRPAINAGVSVSRVGGAAQTKVVKKLSGGIRTDLAQYRELAAFAQFASDLDEATRKQLERGRRVTELLKQPQYQPLQVWELAVSLFSANNGYLDDLDVKDVLPFEKGLREYLKTSHADLIKRIEDTKDLSKDDESALHAAIKDFKKSGAY.

169–176 (GDRQCGKT) serves as a coordination point for ATP.

This sequence belongs to the ATPase alpha/beta chains family. As to quaternary structure, F-type ATPases have 2 components, CF(1) - the catalytic core - and CF(0) - the membrane proton channel. CF(1) has five subunits: alpha(3), beta(3), gamma(1), delta(1), epsilon(1). CF(0) has three main subunits: a(1), b(2) and c(9-12). The alpha and beta chains form an alternating ring which encloses part of the gamma chain. CF(1) is attached to CF(0) by a central stalk formed by the gamma and epsilon chains, while a peripheral stalk is formed by the delta and b chains.

The protein localises to the cell inner membrane. The catalysed reaction is ATP + H2O + 4 H(+)(in) = ADP + phosphate + 5 H(+)(out). Functionally, produces ATP from ADP in the presence of a proton gradient across the membrane. The alpha chain is a regulatory subunit. The polypeptide is ATP synthase subunit alpha 1 (Burkholderia thailandensis (strain ATCC 700388 / DSM 13276 / CCUG 48851 / CIP 106301 / E264)).